The following is a 60-amino-acid chain: Large ribosomal subunit protein bL32 (60 aa).

Belongs to the bacterial ribosomal protein bL32 family.

In Synechococcus sp. (strain JA-3-3Ab) (Cyanobacteria bacterium Yellowstone A-Prime), this protein is Large ribosomal subunit protein bL32.